We begin with the raw amino-acid sequence, 899 residues long: Semaphorin-1A (899 aa).

Positions 1–20 are enriched in low complexity; that stretch reads MLNSHNTNHNNNSASNSNYN. A disordered region spans residues 1–24; it reads MLNSHNTNHNNNSASNSNYNKGHK. Residues 1–40 lie on the Cytoplasmic side of the membrane; sequence MLNSHNTNHNNNSASNSNYNKGHKMHLKSATAKATIMKHK. A helical transmembrane segment spans residues 41–61; sequence LSKFYGYGWMQVFLLLTVLVI. The Extracellular portion of the chain corresponds to 62–657; it reads GNQSAWQENI…INAQYTVETL (596 aa). N-linked (GlcNAc...) asparagine glycosylation is found at asparagine 63, asparagine 90, and asparagine 117. Residues 74-543 enclose the Sema domain; it reads KLYVELGPED…TDSQVVAIQL (470 aa). Cystine bridges form between cysteine 141–cysteine 151 and cysteine 169–cysteine 178. N-linked (GlcNAc...) asparagine glycosylation is found at asparagine 187, asparagine 207, and asparagine 311. Intrachain disulfides connect cysteine 288–cysteine 402 and cysteine 312–cysteine 361. Residue asparagine 404 is glycosylated (N-linked (GlcNAc...) asparagine). The helical transmembrane segment at 658-678 threads the bilayer; sequence VMAVLAGSIFSLLVGFFTGYF. Topologically, residues 679 to 899 are cytoplasmic; the sequence is CGRRCHKDED…PKNCSYIYRD (221 aa). Disordered regions lie at residues 735–766 and 798–899; these read VLLP…QGPN and VMGD…IYRD. Residues 809–827 are compositionally biased toward polar residues; sequence FSTTRSVKKAVNNTNTRNR. The segment covering 828-837 has biased composition (basic residues); the sequence is SLGRARRQPP. Over residues 847–876 the composition is skewed to low complexity; it reads SNSPQQQQQQSQQPHSSSGSSPVMSNSSSS.

Belongs to the semaphorin family. As to expression, expressed by subsets of neurons and muscles.

The protein resides in the cell membrane. Its function is as follows. Involved in growth cone guidance through its role in axonal repulsion. Function in neurons is essential for adult survival, motor neuron survival, and is important for climbing behavior and activity. In Drosophila melanogaster (Fruit fly), this protein is Semaphorin-1A.